The sequence spans 348 residues: Nicotinate-nucleotide--dimethylbenzimidazole phosphoribosyltransferase (348 aa).

Glutamate 316 acts as the Proton acceptor in catalysis.

This sequence belongs to the CobT family.

It carries out the reaction 5,6-dimethylbenzimidazole + nicotinate beta-D-ribonucleotide = alpha-ribazole 5'-phosphate + nicotinate + H(+). Its pathway is nucleoside biosynthesis; alpha-ribazole biosynthesis; alpha-ribazole from 5,6-dimethylbenzimidazole: step 1/2. Functionally, catalyzes the synthesis of alpha-ribazole-5'-phosphate from nicotinate mononucleotide (NAMN) and 5,6-dimethylbenzimidazole (DMB). The protein is Nicotinate-nucleotide--dimethylbenzimidazole phosphoribosyltransferase of Xanthomonas campestris pv. campestris (strain B100).